Consider the following 249-residue polypeptide: Ribonuclease PH (249 aa).

Residues R86 and G124–R126 contribute to the phosphate site.

The protein belongs to the RNase PH family. In terms of assembly, homohexameric ring arranged as a trimer of dimers.

The catalysed reaction is tRNA(n+1) + phosphate = tRNA(n) + a ribonucleoside 5'-diphosphate. Functionally, phosphorolytic 3'-5' exoribonuclease that plays an important role in tRNA 3'-end maturation. Removes nucleotide residues following the 3'-CCA terminus of tRNAs; can also add nucleotides to the ends of RNA molecules by using nucleoside diphosphates as substrates, but this may not be physiologically important. Probably plays a role in initiation of 16S rRNA degradation (leading to ribosome degradation) during starvation. In Clostridium botulinum (strain Eklund 17B / Type B), this protein is Ribonuclease PH.